Consider the following 1092-residue polypeptide: Electroneutral sodium bicarbonate exchanger 1 (1092 aa).

Disordered regions lie at residues 1–26, 55–95, and 243–263; these read MPAGSNEPDGVLSYQRPDEEAVVDQG, LGRQ…HDTP, and KKQSDPHSMDRDGQTVSPQSA. Over 1 to 478 the chain is Extracellular; sequence MPAGSNEPDG…DYRDALSLQC (478 aa). The span at 58–76 shows a compositional bias: basic residues; the sequence is QSHRHHRTHGQKHRRRGGR. Positions 243 to 255 are enriched in basic and acidic residues; sequence KKQSDPHSMDRDG. A helical membrane pass occupies residues 479–499; it reads LASFLFLYCACMSPVITFGGL. Residues 500–507 are Cytoplasmic-facing; it reads LGEATEGR. The helical transmembrane segment at 508 to 528 threads the bilayer; the sequence is ISAIESLFGASMTGIAYSLFA. Topologically, residues 529–565 are extracellular; the sequence is GQPLTILGSTGPVLVFEKILFKFCKDYALSYLSLRAC. Residues 566–586 traverse the membrane as a helical segment; sequence IGLWTAFLCIVLVATDASSLV. Residues 587–595 are Cytoplasmic-facing; sequence CYITRFTEE. A helical membrane pass occupies residues 596-616; that stretch reads AFASLICIIFIYEAIEKLIHL. The Extracellular portion of the chain corresponds to 617–687; that stretch reads AETYPIHMHS…EFIGSACGHH (71 aa). 2 disulfide bridges follow: C636/C684 and C638/C672. Residues N646 and N666 are each glycosylated (N-linked (GlcNAc) asparagine). The chain crosses the membrane as a helical span at residues 688–708; it reads GPYTPDVLFWSCILFFATFIV. Residues 709-731 lie on the Cytoplasmic side of the membrane; it reads SSTLKTFKTSRYFPTRVRSTVSD. The chain crosses the membrane as a helical span at residues 732-752; sequence FAVFLTIFTMVILDFLIGVPS. Topologically, residues 753–778 are extracellular; that stretch reads PKLQVPSVFKPTRDDRGWFISPIGPN. The chain crosses the membrane as a helical span at residues 779-799; it reads PWWTVIAAIIPALLCTILIFM. The Cytoplasmic portion of the chain corresponds to 800–824; sequence DQQITAVIINRKEHKLKKGCGYHLD. A helical membrane pass occupies residues 825-845; the sequence is LLVVAIMLGVCSLMGLPWFVA. Topologically, residues 846 to 881 are extracellular; the sequence is ATVLSITHVNSLKLESECSAPGEQPKFLGIREQRVT. A helical transmembrane segment spans residues 882–902; it reads GLMIFVLMGCSVFMTAVLKFI. Residues 903–904 are Cytoplasmic-facing; sequence PM. A helical transmembrane segment spans residues 905–925; the sequence is PVLYGVFLYMGVSSLQGIQFF. Residues 926–962 lie on the Extracellular side of the membrane; that stretch reads DRLKLFGMPAKHQPDFIYLRHVPLRKVHLFTLVQLTC. The chain crosses the membrane as a helical span at residues 963–983; sequence LVLLWVIKASPAAIVFPMMVL. The Cytoplasmic portion of the chain corresponds to 984–1092; it reads ALVFVRKVMD…GNTKEKSPFN (109 aa).

The protein belongs to the anion exchanger (TC 2.A.31) family. In terms of assembly, homodimer. Expressed in the Purkinje cells and dendrites in the molecular layer of the cerebellum (at protein level). Expressed in the hippocampal neurons (at protein level). Strong expression observed in testis and moderate expression in kidney inner medulla, the submandibular gland, eye, cerebrum and cerebellum.

It localises to the cell membrane. It is found in the apical cell membrane. The protein localises to the basolateral cell membrane. Its subcellular location is the cytoplasmic vesicle. The protein resides in the secretory vesicle. It localises to the synaptic vesicle membrane. It carries out the reaction 2 hydrogencarbonate(out) + chloride(in) + Na(+)(out) = 2 hydrogencarbonate(in) + chloride(out) + Na(+)(in). In terms of biological role, mediates electroneutral sodium- and carbonate-dependent chloride-HCO3(-) exchange with a Na(+):HCO3(-) stoichiometry of 2:1. Plays a major role in pH regulation in neurons. Mediates sodium reabsorption in the renal cortical collecting ducts. This chain is Electroneutral sodium bicarbonate exchanger 1, found in Rattus norvegicus (Rat).